We begin with the raw amino-acid sequence, 389 residues long: Dual-specificity RNA methyltransferase RlmN (389 aa).

Glutamate 110 acts as the Proton acceptor in catalysis. A Radical SAM core domain is found at 116 to 355 (EKDRATLCVS…TIVRKTRGDD (240 aa)). An intrachain disulfide couples cysteine 123 to cysteine 360. The [4Fe-4S] cluster site is built by cysteine 130, cysteine 134, and cysteine 137. Residues 184 to 185 (GE), serine 216, 238 to 240 (SLH), and asparagine 317 each bind S-adenosyl-L-methionine. The active-site S-methylcysteine intermediate is cysteine 360.

It belongs to the radical SAM superfamily. RlmN family. [4Fe-4S] cluster is required as a cofactor.

Its subcellular location is the cytoplasm. It carries out the reaction adenosine(2503) in 23S rRNA + 2 reduced [2Fe-2S]-[ferredoxin] + 2 S-adenosyl-L-methionine = 2-methyladenosine(2503) in 23S rRNA + 5'-deoxyadenosine + L-methionine + 2 oxidized [2Fe-2S]-[ferredoxin] + S-adenosyl-L-homocysteine. It catalyses the reaction adenosine(37) in tRNA + 2 reduced [2Fe-2S]-[ferredoxin] + 2 S-adenosyl-L-methionine = 2-methyladenosine(37) in tRNA + 5'-deoxyadenosine + L-methionine + 2 oxidized [2Fe-2S]-[ferredoxin] + S-adenosyl-L-homocysteine. Functionally, specifically methylates position 2 of adenine 2503 in 23S rRNA and position 2 of adenine 37 in tRNAs. m2A2503 modification seems to play a crucial role in the proofreading step occurring at the peptidyl transferase center and thus would serve to optimize ribosomal fidelity. In Erwinia tasmaniensis (strain DSM 17950 / CFBP 7177 / CIP 109463 / NCPPB 4357 / Et1/99), this protein is Dual-specificity RNA methyltransferase RlmN.